The following is a 749-amino-acid chain: Ribosomal RNA large subunit methyltransferase K/L (749 aa).

The region spanning 43-154 is the THUMP domain; that stretch reads QGYKVCLWSR…KDKATIYLDL (112 aa). The interval 386-406 is disordered; that stretch reads VEPVAPKKTNKETPEPINPWT.

The protein belongs to the methyltransferase superfamily. RlmKL family.

The protein resides in the cytoplasm. It catalyses the reaction guanosine(2445) in 23S rRNA + S-adenosyl-L-methionine = N(2)-methylguanosine(2445) in 23S rRNA + S-adenosyl-L-homocysteine + H(+). It carries out the reaction guanosine(2069) in 23S rRNA + S-adenosyl-L-methionine = N(2)-methylguanosine(2069) in 23S rRNA + S-adenosyl-L-homocysteine + H(+). Its function is as follows. Specifically methylates the guanine in position 2445 (m2G2445) and the guanine in position 2069 (m7G2069) of 23S rRNA. The polypeptide is Ribosomal RNA large subunit methyltransferase K/L (Psychromonas ingrahamii (strain DSM 17664 / CCUG 51855 / 37)).